The following is a 245-amino-acid chain: Malonyl-[acyl-carrier protein] O-methyltransferase (245 aa).

This sequence belongs to the methyltransferase superfamily.

The catalysed reaction is malonyl-[ACP] + S-adenosyl-L-methionine = malonyl-[ACP] methyl ester + S-adenosyl-L-homocysteine. It participates in cofactor biosynthesis; biotin biosynthesis. Its function is as follows. Converts the free carboxyl group of a malonyl-thioester to its methyl ester by transfer of a methyl group from S-adenosyl-L-methionine (SAM). It allows to synthesize pimeloyl-ACP via the fatty acid synthetic pathway. This is Malonyl-[acyl-carrier protein] O-methyltransferase from Calditerrivibrio nitroreducens (strain DSM 19672 / NBRC 101217 / Yu37-1).